The chain runs to 511 residues: ATP synthase subunit alpha 1 (511 aa).

ATP is bound at residue 174 to 181 (GDRQTGKT).

It belongs to the ATPase alpha/beta chains family. F-type ATPases have 2 components, CF(1) - the catalytic core - and CF(0) - the membrane proton channel. CF(1) has five subunits: alpha(3), beta(3), gamma(1), delta(1), epsilon(1). CF(0) has four main subunits: a(1), b(1), b'(1) and c(9-12).

It localises to the cell inner membrane. It catalyses the reaction ATP + H2O + 4 H(+)(in) = ADP + phosphate + 5 H(+)(out). In terms of biological role, produces ATP from ADP in the presence of a proton gradient across the membrane. The alpha chain is a regulatory subunit. This Chlorobium luteolum (strain DSM 273 / BCRC 81028 / 2530) (Pelodictyon luteolum) protein is ATP synthase subunit alpha 1.